Reading from the N-terminus, the 323-residue chain is Oligodendrocyte transcription factor 2 (323 aa).

The span at 1 to 13 (MDSDASLVSSRPS) shows a compositional bias: polar residues. The segment at 1-107 (MDSDASLVSS…KKQMTEPELQ (107 aa)) is disordered. The span at 77 to 93 (SSSSSTSSSTSSAATSS) shows a compositional bias: low complexity. Residues 108–162 (QLRLKINSRERKRMHDLNIAMDGLREVMPYAHGPSVRKLSKIATLLLARNYILML) form the bHLH domain.

Interacts with NKX2-2. Interacts with ZNF488. Expressed specifically in the brain.

It is found in the nucleus. The protein resides in the cytoplasm. In terms of biological role, required for oligodendrocyte and motor neuron specification in the spinal cord, as well as for the development of somatic motor neurons in the hindbrain. Functions together with ZNF488 to promote oligodendrocyte differentiation. Cooperates with OLIG1 to establish the pMN domain of the embryonic neural tube. Antagonist of V2 interneuron and of NKX2-2-induced V3 interneuron development. This is Oligodendrocyte transcription factor 2 (Olig2) from Mus musculus (Mouse).